Reading from the N-terminus, the 168-residue chain is Nicotinamide-nucleotide adenylyltransferase (168 aa).

The protein belongs to the archaeal NMN adenylyltransferase family.

Its subcellular location is the cytoplasm. The enzyme catalyses beta-nicotinamide D-ribonucleotide + ATP + H(+) = diphosphate + NAD(+). The protein operates within cofactor biosynthesis; NAD(+) biosynthesis; NAD(+) from nicotinamide D-ribonucleotide: step 1/1. In Methanoculleus marisnigri (strain ATCC 35101 / DSM 1498 / JR1), this protein is Nicotinamide-nucleotide adenylyltransferase.